The following is a 748-amino-acid chain: E3 ubiquitin-protein ligase SMURF2 (748 aa).

The C2 domain maps to 1–119; the sequence is MSNPGGRRNG…TGYQRLDLCK (119 aa). Residue Lys-119 forms a Glycyl lysine isopeptide (Lys-Gly) (interchain with G-Cter in ubiquitin) linkage. WW domains are found at residues 157-190, 251-284, and 297-330; these read NDLP…RPTR, PDLP…DPRV, and GPLP…DPRL. One can recognise an HECT domain in the interval 414–748; it reads RPKDLWKRLM…IEETCGFAVE (335 aa). Cys-716 functions as the Glycyl thioester intermediate in the catalytic mechanism.

As to quaternary structure, interacts (via WW domains) with SMAD1. Interacts (via WW domains) with SMAD2 (via PY-motif). Interacts (via WW domains) with SMAD3 (via PY-motif). Interacts with SMAD6. Interacts with SMAD7 (via PY-motif) and TGFBR1; SMAD7 recruits SMURF2 to the TGF-beta receptor and regulates its degradation. Does not interact with SMAD4; SMAD4 lacks a PY-motif. Interacts with AIMP1. Interacts with SNON. Interacts with STAMBP and RNF11. May interact with NDFIP1 and NDFIP2; this interaction induces the E3 ubiquitin-protein ligase activity. Interacts with TTC3. In terms of assembly, (Microbial infection) Interacts (via WW domains) with EBOV and MARV VP40 (via PPXY motif); the interaction facilitates VP40 virus-like particle budding. In terms of processing, auto-ubiquitinated and ubiquitinated in the presence of RNF11 and UBE2D1. Ubiquitinated by the SCF(FBXL15) complex and TTC3, leading to its degradation by the proteasome. 'Lys-48'-linked polyubiquitination mediated by TRAF4 at Lys-119 leads to SMURF2 proteasomal degradation. Widely expressed.

The protein localises to the nucleus. The protein resides in the cytoplasm. Its subcellular location is the cell membrane. It is found in the membrane raft. It catalyses the reaction S-ubiquitinyl-[E2 ubiquitin-conjugating enzyme]-L-cysteine + [acceptor protein]-L-lysine = [E2 ubiquitin-conjugating enzyme]-L-cysteine + N(6)-ubiquitinyl-[acceptor protein]-L-lysine.. It participates in protein modification; protein ubiquitination. Its activity is regulated as follows. Activated by NDFIP1- and NDFIP2-binding. E3 ubiquitin-protein ligase which accepts ubiquitin from an E2 ubiquitin-conjugating enzyme in the form of a thioester and then directly transfers the ubiquitin to targeted substrates. Interacts with SMAD7 to trigger SMAD7-mediated transforming growth factor beta/TGF-beta receptor ubiquitin-dependent degradation, thereby down-regulating TGF-beta signaling. In addition, interaction with SMAD7 activates autocatalytic degradation, which is prevented by interaction with AIMP1. Also forms a stable complex with TGF-beta receptor-mediated phosphorylated SMAD1, SMAD2 and SMAD3, and targets SMAD1 and SMAD2 for ubiquitination and proteasome-mediated degradation. SMAD2 may recruit substrates, such as SNON, for ubiquitin-dependent degradation. Negatively regulates TGFB1-induced epithelial-mesenchymal transition and myofibroblast differentiation. Its function is as follows. (Microbial infection) In case of filoviruses Ebola/EBOV and Marburg/MARV infection, the complex formed by viral matrix protein VP40 and SMURF2 facilitates virus budding. This is E3 ubiquitin-protein ligase SMURF2 from Homo sapiens (Human).